Here is a 781-residue protein sequence, read N- to C-terminus: Penicillin-binding protein 1B (781 aa).

Residues 151-322 form a transglycosylase region; sequence FRLAPKLIAM…SLYNPWRNPQ (172 aa). Glu-188 acts as the Proton donor; for transglycosylase activity in catalysis. The segment at 415 to 702 is transpeptidase; the sequence is SQLQLKMKNP…ALQIYKDYLN (288 aa). The active-site Acyl-ester intermediate; for transpeptidase activity is Ser-466. Over residues 749–768 the composition is skewed to low complexity; that stretch reads ETSSPSLTPTTETETPPQES. The tract at residues 749 to 781 is disordered; sequence ETSSPSLTPTTETETPPQESLWDVLDNPNPPAQ.

The protein in the N-terminal section; belongs to the glycosyltransferase 51 family. It in the C-terminal section; belongs to the transpeptidase family.

Its subcellular location is the cell inner membrane. It carries out the reaction [GlcNAc-(1-&gt;4)-Mur2Ac(oyl-L-Ala-gamma-D-Glu-L-Lys-D-Ala-D-Ala)](n)-di-trans,octa-cis-undecaprenyl diphosphate + beta-D-GlcNAc-(1-&gt;4)-Mur2Ac(oyl-L-Ala-gamma-D-Glu-L-Lys-D-Ala-D-Ala)-di-trans,octa-cis-undecaprenyl diphosphate = [GlcNAc-(1-&gt;4)-Mur2Ac(oyl-L-Ala-gamma-D-Glu-L-Lys-D-Ala-D-Ala)](n+1)-di-trans,octa-cis-undecaprenyl diphosphate + di-trans,octa-cis-undecaprenyl diphosphate + H(+). It catalyses the reaction Preferential cleavage: (Ac)2-L-Lys-D-Ala-|-D-Ala. Also transpeptidation of peptidyl-alanyl moieties that are N-acyl substituents of D-alanine.. It functions in the pathway cell wall biogenesis; peptidoglycan biosynthesis. Cell wall formation. Synthesis of cross-linked peptidoglycan from the lipid intermediates. The enzyme has a penicillin-insensitive transglycosylase N-terminal domain (formation of linear glycan strands) and a penicillin-sensitive transpeptidase C-terminal domain (cross-linking of the peptide subunits). The sequence is that of Penicillin-binding protein 1B (mrcB) from Haemophilus influenzae (strain ATCC 51907 / DSM 11121 / KW20 / Rd).